Here is a 357-residue protein sequence, read N- to C-terminus: Phosphoribosylformylglycinamidine cyclo-ligase (357 aa).

This sequence belongs to the AIR synthase family.

It is found in the cytoplasm. It carries out the reaction 2-formamido-N(1)-(5-O-phospho-beta-D-ribosyl)acetamidine + ATP = 5-amino-1-(5-phospho-beta-D-ribosyl)imidazole + ADP + phosphate + H(+). The protein operates within purine metabolism; IMP biosynthesis via de novo pathway; 5-amino-1-(5-phospho-D-ribosyl)imidazole from N(2)-formyl-N(1)-(5-phospho-D-ribosyl)glycinamide: step 2/2. This is Phosphoribosylformylglycinamidine cyclo-ligase from Rhizobium johnstonii (strain DSM 114642 / LMG 32736 / 3841) (Rhizobium leguminosarum bv. viciae).